The following is an 81-amino-acid chain: Putative membrane protein insertion efficiency factor 1 (81 aa).

The protein belongs to the UPF0161 family.

The protein resides in the cell membrane. Its function is as follows. Could be involved in insertion of integral membrane proteins into the membrane. This is Putative membrane protein insertion efficiency factor 1 from Bacillus licheniformis (strain ATCC 14580 / DSM 13 / JCM 2505 / CCUG 7422 / NBRC 12200 / NCIMB 9375 / NCTC 10341 / NRRL NRS-1264 / Gibson 46).